The following is a 546-amino-acid chain: CTP synthase (546 aa).

Residues Met1–Ile265 form an amidoligase domain region. CTP is bound at residue Ser13. Ser13 contacts UTP. Residues Ser14–Ile19 and Asp71 each bind ATP. Mg(2+) contacts are provided by Asp71 and Glu139. CTP contacts are provided by residues Asp146–Glu148, Lys186–Gln191, and Lys222. Residues Lys186–Gln191 and Lys222 each bind UTP. Positions Lys290 to Ala543 constitute a Glutamine amidotransferase type-1 domain. Gly351 is an L-glutamine binding site. The active-site Nucleophile; for glutamine hydrolysis is Cys378. L-glutamine is bound by residues Leu379–Gln382, Glu402, and Arg469. Catalysis depends on residues His516 and Glu518.

The protein belongs to the CTP synthase family. Homotetramer.

The enzyme catalyses UTP + L-glutamine + ATP + H2O = CTP + L-glutamate + ADP + phosphate + 2 H(+). The catalysed reaction is L-glutamine + H2O = L-glutamate + NH4(+). It catalyses the reaction UTP + NH4(+) + ATP = CTP + ADP + phosphate + 2 H(+). The protein operates within pyrimidine metabolism; CTP biosynthesis via de novo pathway; CTP from UDP: step 2/2. Allosterically activated by GTP, when glutamine is the substrate; GTP has no effect on the reaction when ammonia is the substrate. The allosteric effector GTP functions by stabilizing the protein conformation that binds the tetrahedral intermediate(s) formed during glutamine hydrolysis. Inhibited by the product CTP, via allosteric rather than competitive inhibition. Its function is as follows. Catalyzes the ATP-dependent amination of UTP to CTP with either L-glutamine or ammonia as the source of nitrogen. Regulates intracellular CTP levels through interactions with the four ribonucleotide triphosphates. This Dechloromonas aromatica (strain RCB) protein is CTP synthase.